The primary structure comprises 500 residues: Palmitoleoyl-protein carboxylesterase notum1a (500 aa).

The first 26 residues, 1 to 26, serve as a signal peptide directing secretion; that stretch reads MKRSLWVMQVLHWAVMLALVQCGALG. Residue Asn-101 is glycosylated (N-linked (GlcNAc...) asparagine). Active-site charge relay system residues include Ser-237, Asp-344, and His-393.

The protein belongs to the pectinacetylesterase family. Notum subfamily.

It is found in the secreted. The enzyme catalyses [Wnt protein]-O-(9Z)-hexadecenoyl-L-serine + H2O = [Wnt protein]-L-serine + (9Z)-hexadecenoate + H(+). In terms of biological role, carboxylesterase that acts as a key negative regulator of the Wnt signaling pathway. Acts by specifically mediating depalmitoleoylation of WNT proteins. Serine palmitoleoylation of WNT proteins is required for efficient binding to frizzled receptors. In Danio rerio (Zebrafish), this protein is Palmitoleoyl-protein carboxylesterase notum1a.